Consider the following 597-residue polypeptide: Elongation factor 4 (597 aa).

The 183-residue stretch at 2 to 184 folds into the tr-type G domain; sequence NNIRNFSIIA…SLITKVPPPK (183 aa). GTP-binding positions include 14 to 19 and 131 to 134; these read DHGKST and NKID.

This sequence belongs to the TRAFAC class translation factor GTPase superfamily. Classic translation factor GTPase family. LepA subfamily.

The protein resides in the cell inner membrane. The enzyme catalyses GTP + H2O = GDP + phosphate + H(+). Required for accurate and efficient protein synthesis under certain stress conditions. May act as a fidelity factor of the translation reaction, by catalyzing a one-codon backward translocation of tRNAs on improperly translocated ribosomes. Back-translocation proceeds from a post-translocation (POST) complex to a pre-translocation (PRE) complex, thus giving elongation factor G a second chance to translocate the tRNAs correctly. Binds to ribosomes in a GTP-dependent manner. The chain is Elongation factor 4 from Janthinobacterium sp. (strain Marseille) (Minibacterium massiliensis).